Reading from the N-terminus, the 421-residue chain is Tyrosine--tRNA ligase (421 aa).

Tyrosine 38 contacts L-tyrosine. The 'HIGH' region signature appears at 43-52 (PTGDSLHIGH). The L-tyrosine site is built by tyrosine 169 and glutamine 173. The 'KMSKS' region signature appears at 231–235 (KFGKS). Lysine 234 serves as a coordination point for ATP. Residues 353–419 (KNLVDFLVDT…GKKKYTLVHI (67 aa)) form the S4 RNA-binding domain.

Belongs to the class-I aminoacyl-tRNA synthetase family. TyrS type 1 subfamily. As to quaternary structure, homodimer.

It is found in the cytoplasm. It catalyses the reaction tRNA(Tyr) + L-tyrosine + ATP = L-tyrosyl-tRNA(Tyr) + AMP + diphosphate + H(+). Its function is as follows. Catalyzes the attachment of tyrosine to tRNA(Tyr) in a two-step reaction: tyrosine is first activated by ATP to form Tyr-AMP and then transferred to the acceptor end of tRNA(Tyr). This Lactobacillus delbrueckii subsp. bulgaricus (strain ATCC 11842 / DSM 20081 / BCRC 10696 / JCM 1002 / NBRC 13953 / NCIMB 11778 / NCTC 12712 / WDCM 00102 / Lb 14) protein is Tyrosine--tRNA ligase.